The sequence spans 165 residues: Ribosomal RNA large subunit methyltransferase H (165 aa).

Position 109 (glycine 109) interacts with S-adenosyl-L-methionine.

The protein belongs to the RNA methyltransferase RlmH family. As to quaternary structure, homodimer.

It is found in the cytoplasm. The enzyme catalyses pseudouridine(1915) in 23S rRNA + S-adenosyl-L-methionine = N(3)-methylpseudouridine(1915) in 23S rRNA + S-adenosyl-L-homocysteine + H(+). Its function is as follows. Specifically methylates the pseudouridine at position 1915 (m3Psi1915) in 23S rRNA. The polypeptide is Ribosomal RNA large subunit methyltransferase H (Methylorubrum populi (strain ATCC BAA-705 / NCIMB 13946 / BJ001) (Methylobacterium populi)).